We begin with the raw amino-acid sequence, 600 residues long: Aspartate--tRNA(Asp/Asn) ligase (600 aa).

An L-aspartate-binding site is contributed by Glu174. Residues 198–201 (QLFK) are aspartate. Arg220 serves as a coordination point for L-aspartate. ATP contacts are provided by residues 220–222 (RDE) and Gln229. His457 contributes to the L-aspartate binding site. ATP is bound at residue Glu491. Position 498 (Arg498) interacts with L-aspartate. Position 543 to 546 (543 to 546 (GLDR)) interacts with ATP.

The protein belongs to the class-II aminoacyl-tRNA synthetase family. Type 1 subfamily. As to quaternary structure, homodimer.

Its subcellular location is the cytoplasm. The catalysed reaction is tRNA(Asx) + L-aspartate + ATP = L-aspartyl-tRNA(Asx) + AMP + diphosphate. Its function is as follows. Aspartyl-tRNA synthetase with relaxed tRNA specificity since it is able to aspartylate not only its cognate tRNA(Asp) but also tRNA(Asn). Reaction proceeds in two steps: L-aspartate is first activated by ATP to form Asp-AMP and then transferred to the acceptor end of tRNA(Asp/Asn). The polypeptide is Aspartate--tRNA(Asp/Asn) ligase (Burkholderia vietnamiensis (strain G4 / LMG 22486) (Burkholderia cepacia (strain R1808))).